The primary structure comprises 729 residues: Transketolase (729 aa).

Residue His-97 coordinates substrate. Residues His-138 and 186 to 188 contribute to the thiamine diphosphate site; that span reads GPL. Residue Asp-227 coordinates Mg(2+). Gly-228 and Asn-257 together coordinate thiamine diphosphate. Residues Asn-257 and Ile-259 each coordinate Mg(2+). Substrate contacts are provided by His-332, Arg-423, and Ser-450. Thiamine diphosphate is bound at residue His-332. Residue Glu-477 is the Proton donor of the active site. Phe-503 provides a ligand contact to thiamine diphosphate. Substrate contacts are provided by His-527, Asp-535, and Arg-586.

This sequence belongs to the transketolase family. In terms of assembly, homodimer. It depends on Mg(2+) as a cofactor. Ca(2+) serves as cofactor. Requires Mn(2+) as cofactor. The cofactor is Co(2+). Thiamine diphosphate is required as a cofactor.

The catalysed reaction is D-sedoheptulose 7-phosphate + D-glyceraldehyde 3-phosphate = aldehydo-D-ribose 5-phosphate + D-xylulose 5-phosphate. Functionally, catalyzes the transfer of a two-carbon ketol group from a ketose donor to an aldose acceptor, via a covalent intermediate with the cofactor thiamine pyrophosphate. This Streptococcus pyogenes serotype M6 (strain ATCC BAA-946 / MGAS10394) protein is Transketolase.